The following is a 251-amino-acid chain: 2-amino-5-chloromuconate deaminase (251 aa).

As to quaternary structure, monomer.

The catalysed reaction is (2Z,4E)-2-aminomuconate + H2O = (2Z,4E)-2-hydroxyhexa-2,4-dienedioate + NH4(+). It functions in the pathway xenobiotic degradation; 4-chloronitrobenzene degradation. It participates in xenobiotic degradation; nitrobenzene degradation. Cysteine residue modifying agents such as p-chloromercuribenzoate and the SH-binding metals Zn(2+), Ni(2+) and Cu(2+) completely inhibit deaminase activity, whereas Ca(2+), Mg(2+) and the histidine residue-modifying agent diethyl pyrocarbonate inhibit the activity by 23 to 50%. Functionally, involved in the biodegradation of xenobiotic compounds, such as nitrobenzene and 4-chloronitrobenzene (4-CNB). CnbZ preferentially catalyzes the deamination of 2-amino-5-chloromuconate (2A5CM) to yield 2-hydroxy-5-chloromuconate (2H5CM). Also able to catalyze the deamination of 2-aminomuconate to yield 2-hydroxymuconate, which spontaneously converts into its keto form, 2-oxalocrotonate. This is 2-amino-5-chloromuconate deaminase from Comamonas testosteroni (Pseudomonas testosteroni).